Here is a 223-residue protein sequence, read N- to C-terminus: Carnitine transport permease protein OpuCD (223 aa).

The ABC transmembrane type-1 domain maps to 22–202; the sequence is FWRHFLMSAY…VMAILADVLL (181 aa). 5 consecutive transmembrane segments (helical) span residues 27-47, 63-83, 87-107, 148-168, and 182-202; these read LMSAYGVIFAAIIAIPLGVYI, IIQTIPALAMLAVLMLIMGLG, VVLSLFLYSLLPILKNTYTGI, ALVIAIGVAAIGTFVGAGGLG, and AIILAGAIPTAVMAILADVLL.

It belongs to the binding-protein-dependent transport system permease family. The complex is composed of two ATP-binding proteins (OpuCA), two transmembrane proteins (OpuCB and OpuCD) and a solute-binding protein (OpuCC).

The protein localises to the cell membrane. In terms of biological role, part of the ABC transporter complex OpuCABCD involved in carnitine uptake. Probably responsible for the translocation of the substrate across the membrane. Involved, with BetL and GbuABC, in osmoprotection and cryoprotection of Listeria. Can also mediate weak glycine betaine transport. This Listeria monocytogenes serotype 1/2a (strain 10403S) protein is Carnitine transport permease protein OpuCD (opuCD).